A 201-amino-acid chain; its full sequence is Glycerol-3-phosphate acyltransferase (201 aa).

The next 6 helical transmembrane spans lie at 10–30 (MLIGALIFGYVLGSIPFGLIL), 60–80 (LAAATLILDALKGTAAALIAA), 86–106 (AAIAAGFGAFIGHLFPVWIGF), 116–136 (LGVLIGLAWAGALVFAAAWIV), 139–159 (LLTRYSSLSALVASLVVPIAL), and 166–186 (ALAALFAIMTVIVFIKHRANI).

This sequence belongs to the PlsY family. As to quaternary structure, probably interacts with PlsX.

The protein localises to the cell inner membrane. It catalyses the reaction an acyl phosphate + sn-glycerol 3-phosphate = a 1-acyl-sn-glycero-3-phosphate + phosphate. The protein operates within lipid metabolism; phospholipid metabolism. Catalyzes the transfer of an acyl group from acyl-phosphate (acyl-PO(4)) to glycerol-3-phosphate (G3P) to form lysophosphatidic acid (LPA). This enzyme utilizes acyl-phosphate as fatty acyl donor, but not acyl-CoA or acyl-ACP. This Brucella ovis (strain ATCC 25840 / 63/290 / NCTC 10512) protein is Glycerol-3-phosphate acyltransferase.